Reading from the N-terminus, the 289-residue chain is Glucanase inhibitor protein 2 (289 aa).

An N-terminal signal peptide occupies residues 1 to 19 (MKVTATIAAASMAIAAASA). A Peptidase S1 domain is found at 29 to 257 (ILGGSIIPSG…ALKWVNPIIK (229 aa)). A disulfide bond links Cys56 and Cys72. N-linked (GlcNAc...) asparagine glycans are attached at residues Asn89, Asn104, and Asn109. 2 disulfide bridges follow: Cys180-Cys192 and Cys202-Cys233.

It belongs to the peptidase S1 family.

Its subcellular location is the secreted. In terms of biological role, secreted effector that suppresses host plant glucan elicitor-mediated defense responses. Targets host endoglucanases and inhibits the endoglucanase-mediated release of elicitor-active glucan oligosaccharides from P.sojae cell walls. This is Glucanase inhibitor protein 2 from Phytophthora sojae (Soybean stem and root rot agent).